Here is a 151-residue protein sequence, read N- to C-terminus: Putative pre-16S rRNA nuclease (151 aa).

The protein belongs to the YqgF nuclease family.

It localises to the cytoplasm. Functionally, could be a nuclease involved in processing of the 5'-end of pre-16S rRNA. This Bifidobacterium longum subsp. infantis (strain ATCC 15697 / DSM 20088 / JCM 1222 / NCTC 11817 / S12) protein is Putative pre-16S rRNA nuclease.